A 177-amino-acid chain; its full sequence is MSRVGKKPVVVPSGVTASVQGQIVTMKGPKGQLQFIVHDDVEVQFENGSVTVKPRVETNRARALYGTARAQVANLLEGVTKGFEKKLDITGVGYRAALQGKKLQLALGYSHDVVYDIPDGITITVPKPTEIFISGNDSQRVGQVAAEIRSYRPPEPYKGKGVRYSDEFIFRKEGKKK.

The protein belongs to the universal ribosomal protein uL6 family. In terms of assembly, part of the 50S ribosomal subunit.

In terms of biological role, this protein binds to the 23S rRNA, and is important in its secondary structure. It is located near the subunit interface in the base of the L7/L12 stalk, and near the tRNA binding site of the peptidyltransferase center. The chain is Large ribosomal subunit protein uL6 from Rhodopseudomonas palustris (strain BisB18).